A 376-amino-acid polypeptide reads, in one-letter code: Arabinogalactan endo-beta-1,4-galactanase (376 aa).

The N-terminal stretch at 1–17 (MKKKILAATAILLAAIA) is a signal peptide. E161 serves as the catalytic Proton donor. E270 serves as the catalytic Nucleophile. Positions 281 and 285 each coordinate Ca(2+).

It belongs to the glycosyl hydrolase 53 family. Ca(2+) serves as cofactor.

The enzyme catalyses The enzyme specifically hydrolyzes (1-&gt;4)-beta-D-galactosidic linkages in type I arabinogalactans.. This chain is Arabinogalactan endo-beta-1,4-galactanase (ganB), found in Cellvibrio japonicus (strain Ueda107) (Pseudomonas fluorescens subsp. cellulosa).